We begin with the raw amino-acid sequence, 573 residues long: Solute carrier family 41 member 2 (573 aa).

At 1 to 162 the chain is on the extracellular side; the sequence is MTHSKGRPVT…KESSGVMALQ (162 aa). Serine 137 and serine 138 each carry phosphoserine. A helical transmembrane segment spans residues 163 to 183; sequence ILVPFLLAGFGTVSAGMVLDI. Residues 184-195 lie on the Cytoplasmic side of the membrane; it reads VQHWEVFKNVTE. A helical membrane pass occupies residues 196-216; the sequence is VFILVPALLGLKGNLEMTLAS. Topologically, residues 217 to 245 are extracellular; that stretch reads RLSTAVNVGKMDSPIEKWNLIIGNLALKQ. A helical membrane pass occupies residues 246 to 266; it reads VQATVVGFLAAVAAIILGWIP. The Cytoplasmic portion of the chain corresponds to 267–282; the sequence is EGKYYLSHSILLCSSS. A helical membrane pass occupies residues 283–303; it reads VATAFIASLLQGIIMVGVIVG. Residues 304–313 are Extracellular-facing; sequence SKKTGINPDN. A helical membrane pass occupies residues 314 to 334; that stretch reads VATPIAASFGDLITLAILAWI. Residues 335–347 are Cytoplasmic-facing; sequence SQGLYSCLETYYY. Residues 348–368 form a helical membrane-spanning segment; sequence ISPLVCAFFLALTPIWIIIAA. Over 369-376 the chain is Extracellular; the sequence is KHPATRTV. Residues 377–397 traverse the membrane as a helical segment; the sequence is LHSGWEPVITAMVISSIGGLI. Residues 398–406 lie on the Cytoplasmic side of the membrane; it reads LDTTVSDPN. The helical transmembrane segment at 407-427 threads the bilayer; it reads LVGIVVYTPVINGIGGNLVAI. At 428–469 the chain is on the extracellular side; that stretch reads QASRISTYLHLHSIPGELPEEPKGCSYPFRTFFGSGVNNKSA. A helical transmembrane segment spans residues 470 to 490; it reads QVLLLFVIPGHLIFLYTIHLM. Topologically, residues 491-498 are cytoplasmic; sequence KSGHTSLT. The helical transmembrane segment at 499–519 threads the bilayer; sequence VVFVVVYLFAAVLQVFTLLWI. Over 520–543 the chain is Extracellular; the sequence is ADWMVHRFWRKGKDPDSFSIPYLT. A helical membrane pass occupies residues 544-564; that stretch reads ALGDLLGTALLALSFHFLWLI. Topologically, residues 565–573 are cytoplasmic; it reads GDRDGDVGD.

The protein belongs to the SLC41A transporter family.

It localises to the cell membrane. It carries out the reaction Mg(2+)(in) = Mg(2+)(out). The catalysed reaction is Mn(2+)(in) = Mn(2+)(out). It catalyses the reaction Co(2+)(in) = Co(2+)(out). The enzyme catalyses Ni(2+)(in) = Ni(2+)(out). It carries out the reaction Fe(2+)(in) = Fe(2+)(out). Its function is as follows. Acts as a plasma-membrane magnesium transporter. Can also mediate the transport of other divalent metal cations in an order of Ba(2+) &gt; Ni(2+) &gt; Co(2+) &gt; Fe(2+) &gt; Mn(2+). The sequence is that of Solute carrier family 41 member 2 (Slc41a2) from Mus musculus (Mouse).